Here is a 751-residue protein sequence, read N- to C-terminus: Photosystem I P700 chlorophyll a apoprotein A1 (751 aa).

8 consecutive transmembrane segments (helical) span residues 71 to 94 (VFSAHFGQLAIIFTWLSGMYFHGA), 157 to 180 (LYCTAIGALIFAALMLFAGWFHYH), 196 to 220 (LNHHLAGLLGLGSLSWAGHQIHVSL), 292 to 310 (TAHHHLAIAVLFLIAGHMY), 347 to 370 (WHAQLALNLAMLGSLTIIVAHHMY), 386 to 412 (LSLFTHHMWIGGFIIVGAAAHAAIFLV), 434 to 456 (AIISHLNWVCIFLGFHSFGLYIH), and 532 to 550 (FLVHHIHAFTIHVTVLILL). Cys574 and Cys583 together coordinate [4Fe-4S] cluster. Helical transmembrane passes span 590-611 (HVFLGLFWMYNAISVVIFHFSW) and 665-687 (LSAYGLFFLGAHFVWAFSLMFLF). His676 lines the chlorophyll a' pocket. The chlorophyll a site is built by Met684 and Tyr692. Phylloquinone is bound at residue Trp693. The helical transmembrane segment at 725 to 745 (AVGVAHYLLGGIVTTWAFFLA) threads the bilayer.

It belongs to the PsaA/PsaB family. The PsaA/B heterodimer binds the P700 chlorophyll special pair and subsequent electron acceptors. PSI consists of a core antenna complex that captures photons, and an electron transfer chain that converts photonic excitation into a charge separation. The eukaryotic PSI reaction center is composed of at least 11 subunits. It depends on P700 is a chlorophyll a/chlorophyll a' dimer, A0 is one or more chlorophyll a, A1 is one or both phylloquinones and FX is a shared 4Fe-4S iron-sulfur center. as a cofactor.

Its subcellular location is the plastid. The protein localises to the chloroplast thylakoid membrane. The catalysed reaction is reduced [plastocyanin] + hnu + oxidized [2Fe-2S]-[ferredoxin] = oxidized [plastocyanin] + reduced [2Fe-2S]-[ferredoxin]. PsaA and PsaB bind P700, the primary electron donor of photosystem I (PSI), as well as the electron acceptors A0, A1 and FX. PSI is a plastocyanin-ferredoxin oxidoreductase, converting photonic excitation into a charge separation, which transfers an electron from the donor P700 chlorophyll pair to the spectroscopically characterized acceptors A0, A1, FX, FA and FB in turn. Oxidized P700 is reduced on the lumenal side of the thylakoid membrane by plastocyanin. This chain is Photosystem I P700 chlorophyll a apoprotein A1, found in Welwitschia mirabilis (Tree tumbo).